A 108-amino-acid polypeptide reads, in one-letter code: MLVLKTFSLFILTALAEILGCYLPYLWLKKDGSVWLLLPAAISLAVFAWLLSLHPTAAGRVYAAYGGVYIFVALGWLWLVDGIRPSTWDFVGVGVALAGMAIIMFAPR.

Transmembrane regions (helical) follow at residues 7–27 (FSLF…PYLW), 33–53 (SVWL…LLSL), 63–83 (AAYG…VDGI), and 87–107 (TWDF…MFAP).

The protein belongs to the UPF0060 family.

It is found in the cell inner membrane. This is UPF0060 membrane protein Mfla_0485 from Methylobacillus flagellatus (strain ATCC 51484 / DSM 6875 / VKM B-1610 / KT).